Here is a 2352-residue protein sequence, read N- to C-terminus: Ectopic P granules protein 5 (2352 aa).

Disordered stretches follow at residues 1–112 and 1315–1335; these read MAEL…IFPR and KNRE…SSAK. The span at 66–81 shows a compositional bias: basic and acidic residues; that stretch reads DSLKREEASEPLKDVR.

Belongs to the EPG5 family. Expressed in pharyngeal and body wall muscles and intestine cells.

The protein resides in the cytoplasm. It localises to the cytoplasmic vesicle. The protein localises to the phagosome membrane. Its function is as follows. Involved in the maturation of autophagosomes into autolysosomes during starvation-induced autotrophy. Specifically, involved in the clearance of apoptotic cells by promoting the delivery of engulfed apoptotic cells to the lysosome. This chain is Ectopic P granules protein 5, found in Caenorhabditis elegans.